We begin with the raw amino-acid sequence, 161 residues long: uncharacterized protein (161 aa).

The or 21 signal peptide spans 1-23; the sequence is MKKFAFLTALFAACYLPNAYAHA. Residues 129-149 form a helical membrane-spanning segment; that stretch reads IYLHDILGGIGYIVGIAGLIA.

It localises to the membrane. This is an uncharacterized protein from Haemophilus influenzae (strain ATCC 51907 / DSM 11121 / KW20 / Rd).